The sequence spans 1343 residues: DNA-directed RNA polymerase subunit beta (1343 aa).

It belongs to the RNA polymerase beta chain family. In terms of assembly, the RNAP catalytic core consists of 2 alpha, 1 beta, 1 beta' and 1 omega subunit. When a sigma factor is associated with the core the holoenzyme is formed, which can initiate transcription.

The catalysed reaction is RNA(n) + a ribonucleoside 5'-triphosphate = RNA(n+1) + diphosphate. In terms of biological role, DNA-dependent RNA polymerase catalyzes the transcription of DNA into RNA using the four ribonucleoside triphosphates as substrates. The polypeptide is DNA-directed RNA polymerase subunit beta (Shewanella pealeana (strain ATCC 700345 / ANG-SQ1)).